The following is a 404-amino-acid chain: Imidazolonepropionase (404 aa).

2 residues coordinate Fe(3+): H73 and H75. Zn(2+) is bound by residues H73 and H75. 4-imidazolone-5-propanoate-binding residues include R82, Y145, and H178. Y145 serves as a coordination point for N-formimidoyl-L-glutamate. Fe(3+) is bound at residue H243. H243 contacts Zn(2+). Q246 contacts 4-imidazolone-5-propanoate. D318 contacts Fe(3+). Residue D318 participates in Zn(2+) binding. N320 and G322 together coordinate N-formimidoyl-L-glutamate. S323 lines the 4-imidazolone-5-propanoate pocket.

Belongs to the metallo-dependent hydrolases superfamily. HutI family. It depends on Zn(2+) as a cofactor. Requires Fe(3+) as cofactor.

The protein localises to the cytoplasm. The enzyme catalyses 4-imidazolone-5-propanoate + H2O = N-formimidoyl-L-glutamate. The protein operates within amino-acid degradation; L-histidine degradation into L-glutamate; N-formimidoyl-L-glutamate from L-histidine: step 3/3. Catalyzes the hydrolytic cleavage of the carbon-nitrogen bond in imidazolone-5-propanoate to yield N-formimidoyl-L-glutamate. It is the third step in the universal histidine degradation pathway. This Bradyrhizobium diazoefficiens (strain JCM 10833 / BCRC 13528 / IAM 13628 / NBRC 14792 / USDA 110) protein is Imidazolonepropionase.